The sequence spans 204 residues: Small ribosomal subunit protein uS7 (204 aa).

N-acetylmethionine is present on Met1. Thr2 bears the N-acetylthreonine; in 40S ribosomal protein S5, N-terminally processed mark. Thr14 carries the phosphothreonine modification. The residue at position 47 (Lys47) is an N6-acetyllysine; alternate. A Glycyl lysine isopeptide (Lys-Gly) (interchain with G-Cter in SUMO2); alternate cross-link involves residue Lys47. Ser142 is subject to Phosphoserine.

It belongs to the universal ribosomal protein uS7 family. In terms of assembly, component of the small ribosomal subunit. Part of the small subunit (SSU) processome, composed of more than 70 proteins and the RNA chaperone small nucleolar RNA (snoRNA) U3.

Its subcellular location is the cytoplasm. The protein resides in the nucleus. It is found in the nucleolus. Functionally, component of the small ribosomal subunit. The ribosome is a large ribonucleoprotein complex responsible for the synthesis of proteins in the cell. Part of the small subunit (SSU) processome, first precursor of the small eukaryotic ribosomal subunit. During the assembly of the SSU processome in the nucleolus, many ribosome biogenesis factors, an RNA chaperone and ribosomal proteins associate with the nascent pre-rRNA and work in concert to generate RNA folding, modifications, rearrangements and cleavage as well as targeted degradation of pre-ribosomal RNA by the RNA exosome. The polypeptide is Small ribosomal subunit protein uS7 (Rps5) (Rattus norvegicus (Rat)).